The primary structure comprises 638 residues: Phosphomethylpyrimidine synthase (638 aa).

Substrate contacts are provided by residues N243, M272, Y301, H337, 357-359 (SRG), 398-401 (DGLR), and E437. A Zn(2+)-binding site is contributed by H441. Y464 contributes to the substrate binding site. Zn(2+) is bound at residue H505. Positions 585, 588, and 593 each coordinate [4Fe-4S] cluster.

It belongs to the ThiC family. As to quaternary structure, homodimer. It depends on [4Fe-4S] cluster as a cofactor.

It carries out the reaction 5-amino-1-(5-phospho-beta-D-ribosyl)imidazole + S-adenosyl-L-methionine = 4-amino-2-methyl-5-(phosphooxymethyl)pyrimidine + CO + 5'-deoxyadenosine + formate + L-methionine + 3 H(+). The protein operates within cofactor biosynthesis; thiamine diphosphate biosynthesis. In terms of biological role, catalyzes the synthesis of the hydroxymethylpyrimidine phosphate (HMP-P) moiety of thiamine from aminoimidazole ribotide (AIR) in a radical S-adenosyl-L-methionine (SAM)-dependent reaction. The polypeptide is Phosphomethylpyrimidine synthase (Azoarcus sp. (strain BH72)).